Consider the following 727-residue polypeptide: Engulfment and cell motility protein 1 (727 aa).

A Phosphotyrosine; by HCK modification is found at tyrosine 18. Residues lysine 100 and lysine 105 each carry the N6-acetyllysine modification. The residue at position 216 (tyrosine 216) is a Phosphotyrosine; by HCK. The ELMO domain maps to 319–492 (AQRDIIFELR…VVKEQVMRAL (174 aa)). Phosphoserine is present on serine 344. Tyrosine 395 and tyrosine 511 each carry phosphotyrosine; by HCK. The PH domain maps to 555–676 (RLVEGTCFRK…DGLNALLGKD (122 aa)). An SH3-binding motif is present at residues 707–714 (PDAPPPIP). Tyrosine 720 is modified (phosphotyrosine; by HCK).

In terms of assembly, interacts with ADGRB1. Interacts directly with the SH3-domain of DOCK1 via its SH3-binding site. Part of a complex with DOCK1 and RAC1. Part of a complex with DOCK1 and CRK isoform CRK-II. Interacts with PLEKHG6. Interacts with HCK (via SH3 domain). Interacts with ADGRB3. Interacts with DOCK5. Post-translationally, phosphorylated by HCK. Widely expressed, with a higher expression in the spleen and placenta.

Its subcellular location is the cytoplasm. It localises to the cell membrane. Involved in cytoskeletal rearrangements required for phagocytosis of apoptotic cells and cell motility. Acts in association with DOCK1 and CRK. Was initially proposed to be required in complex with DOCK1 to activate Rac Rho small GTPases. May enhance the guanine nucleotide exchange factor (GEF) activity of DOCK1. The sequence is that of Engulfment and cell motility protein 1 (ELMO1) from Homo sapiens (Human).